The following is a 944-amino-acid chain: Nonsense-mediated mRNA decay factor SMG8 (944 aa).

Disordered regions lie at residues 560-597 (NTGK…QNTA) and 628-653 (QASS…DTEN). Over residues 568 to 583 (QDEDAGEDEAEEEEGQ) the composition is skewed to acidic residues. Polar residues predominate over residues 628-650 (QASSEQLSNSEQNTTSSGTSSAD).

Belongs to the SMG8 family.

Functionally, involved in nonsense-mediated decay (NMD) of mRNAs containing premature stop codons. Probable component of kinase complex containing nonC and recruited to stalled ribosomes. The sequence is that of Nonsense-mediated mRNA decay factor SMG8 from Drosophila simulans (Fruit fly).